A 142-amino-acid chain; its full sequence is Small ribosomal subunit protein uS12 (142 aa).

This sequence belongs to the universal ribosomal protein uS12 family.

The protein is Small ribosomal subunit protein uS12 of Tetrahymena thermophila.